Reading from the N-terminus, the 346-residue chain is Protein Rae1 (346 aa).

WD repeat units follow at residues 17–61 (ASPP…ATVP), 64–105 (MKTM…VMQV), 126–148 (LMTGSWDKTLKFWDTRSPNPMMT), and 255–289 (VNDIAFHPVHGTLVTVGSDGTFSFWDKDARTKLKS).

This sequence belongs to the WD repeat rae1 family. Interacts with hiw; the interaction with Rae1 may protect hiw from autophagy-mediated degradation. Interacts with Nup98-96. Head (at protein level).

It is found in the cytoplasm. The protein localises to the perinuclear region. It localises to the nucleus. Its subcellular location is the nucleus envelope. The protein resides in the chromosome. Probable component of the nuclear pore complex (NPC) which regulates the nuclear export of specific mRNAs and promotes cell cycle progression during mitosis and male meiosis. Acts with Nup98-96 to promote the nuclear export of specific mRNAs such as Moe, however it does not appear to be required for general nuclear mRNA transport. Essential mitotic and male meiotic cell cycle regulator with roles in many aspects of the cell cycle including chromatin organization and condensation, spindle assembly, chromosome segregation, and maintaining nuclear structure. During male meiosis it is required for completion of meiosis I, as well as accurate cytokinesis of the secondary spermatocytes, and postmeiotic differentiation of spermatids. Acts as a downstream regulatory target of the Hippo/SWH (Sav/Wts/Hpo) signaling pathway to promote mitotic cell cycle progression and proliferation during wing and eye development, and thereby plays a key role in integrating the regulation of proliferation with organ size control. When the Hippo/SWH signaling pathway is inactive, Rae1 acts independently of yki to increase organ size by promoting mitotic S-phase entry and increase cellular proliferation. When the Hippo/SWH signaling pathway is active it inhibits the activity of Rae1 in a Wts-dependent manner to restrict organ growth. However, Rae1 is also able to negatively regulate the levels and activity of yki likely by activating the core kinases of the Hippo/SWH signaling pathway hpo and Wts and increasing the protein levels of hpo, Mer and Wts; it is therefore likely that it functions as part of a negative feedback loop with the Hippo/SWH signaling pathway to regulate pathway homeostasis and prevent organ overgrowth. Promotes mitotic cell cycle progression, at least in part, by increasing the accumulation of mitotic cyclins such as CycB, possibly by directly up-regulating cyclin transcripts or by inhibiting the anaphase promoting complex/cyclosome (APC/C) activator fzy. Also required in presynaptic, postmitotic motor neurons to restrain synaptic terminal growth. Promotes the expression and stability of the an E3 ubiquitin ligase of hiw, and is likely to function in the regulation of synaptic growth by binding to hiw and protecting it from autophagy-mediated degradation. This chain is Protein Rae1, found in Drosophila melanogaster (Fruit fly).